The primary structure comprises 79 residues: Dolichol phosphate-mannose biosynthesis regulatory protein (79 aa).

A run of 2 helical transmembrane segments spans residues 8–28 (IGFV…TWVI) and 50–70 (IIIP…FLGL).

Belongs to the DPM2 family. Component of the dolichol-phosphate mannose (DPM) synthase complex composed of dpm1, dpm2 and dpm3.

It localises to the endoplasmic reticulum membrane. It participates in protein modification; protein glycosylation. Regulates the biosynthesis of dolichol phosphate-mannose. Regulatory subunit of the dolichol-phosphate mannose (DPM) synthase complex; essential for the ER localization and stable expression of dpm1. The sequence is that of Dolichol phosphate-mannose biosynthesis regulatory protein (dpm2-1) from Dictyostelium discoideum (Social amoeba).